The chain runs to 256 residues: 5-keto-4-deoxy-D-glucarate aldolase (256 aa).

H50 acts as the Proton acceptor in catalysis. Residue Q151 coordinates substrate. E153 serves as a coordination point for Mg(2+). Substrate is bound by residues S178 and D179. Residue D179 coordinates Mg(2+).

It belongs to the HpcH/HpaI aldolase family. KDGluc aldolase subfamily. In terms of assembly, homohexamer; trimer of dimers. Mg(2+) serves as cofactor.

The enzyme catalyses 5-dehydro-4-deoxy-D-glucarate = 2-hydroxy-3-oxopropanoate + pyruvate. It catalyses the reaction 2-dehydro-3-deoxy-D-glucarate = 2-hydroxy-3-oxopropanoate + pyruvate. It functions in the pathway carbohydrate acid metabolism; galactarate degradation; D-glycerate from galactarate: step 2/3. In terms of biological role, catalyzes the reversible retro-aldol cleavage of both 5-keto-4-deoxy-D-glucarate and 2-keto-3-deoxy-D-glucarate to pyruvate and tartronic semialdehyde. The protein is 5-keto-4-deoxy-D-glucarate aldolase of Salmonella paratyphi A (strain ATCC 9150 / SARB42).